The primary structure comprises 373 residues: Glutamate 5-kinase (373 aa).

K15 is an ATP binding site. Substrate contacts are provided by S55, D142, and N154. ATP is bound at residue 174 to 175 (TD). Residues 281 to 359 (RGSVVLDDGA…SQIEAVLGYV (79 aa)) enclose the PUA domain.

It belongs to the glutamate 5-kinase family.

It localises to the cytoplasm. It carries out the reaction L-glutamate + ATP = L-glutamyl 5-phosphate + ADP. Its pathway is amino-acid biosynthesis; L-proline biosynthesis; L-glutamate 5-semialdehyde from L-glutamate: step 1/2. In terms of biological role, catalyzes the transfer of a phosphate group to glutamate to form L-glutamate 5-phosphate. The protein is Glutamate 5-kinase of Nitrosomonas eutropha (strain DSM 101675 / C91 / Nm57).